Here is a 507-residue protein sequence, read N- to C-terminus: Glycerol kinase (507 aa).

Position 15 (threonine 15) interacts with ADP. Residues threonine 15, threonine 16, and serine 17 each contribute to the ATP site. Threonine 15 provides a ligand contact to sn-glycerol 3-phosphate. Residue arginine 19 coordinates ADP. Sn-glycerol 3-phosphate contacts are provided by arginine 85, glutamate 86, tyrosine 137, and aspartate 250. Glycerol is bound by residues arginine 85, glutamate 86, tyrosine 137, aspartate 250, and glutamine 251. Residues threonine 272 and glycine 316 each contribute to the ADP site. ATP is bound by residues threonine 272, glycine 316, glutamine 320, and glycine 417. Glycine 417 contacts ADP.

It belongs to the FGGY kinase family.

The catalysed reaction is glycerol + ATP = sn-glycerol 3-phosphate + ADP + H(+). It functions in the pathway polyol metabolism; glycerol degradation via glycerol kinase pathway; sn-glycerol 3-phosphate from glycerol: step 1/1. With respect to regulation, inhibited by fructose 1,6-bisphosphate (FBP). Key enzyme in the regulation of glycerol uptake and metabolism. Catalyzes the phosphorylation of glycerol to yield sn-glycerol 3-phosphate. This Mycoplasmopsis pulmonis (strain UAB CTIP) (Mycoplasma pulmonis) protein is Glycerol kinase.